Consider the following 244-residue polypeptide: tRNA (guanine-N(1)-)-methyltransferase (244 aa).

S-adenosyl-L-methionine contacts are provided by residues Gly110 and 129–134; that span reads IGDYIL.

This sequence belongs to the RNA methyltransferase TrmD family. Homodimer.

It is found in the cytoplasm. It carries out the reaction guanosine(37) in tRNA + S-adenosyl-L-methionine = N(1)-methylguanosine(37) in tRNA + S-adenosyl-L-homocysteine + H(+). Its function is as follows. Specifically methylates guanosine-37 in various tRNAs. The protein is tRNA (guanine-N(1)-)-methyltransferase of Syntrophomonas wolfei subsp. wolfei (strain DSM 2245B / Goettingen).